A 439-amino-acid chain; its full sequence is FAD-linked oxidoreductase phmC (439 aa).

Residues 1–19 form the signal peptide; sequence MLSSILLTIFCAFLSSTGA. 2 N-linked (GlcNAc...) asparagine glycosylation sites follow: Asn-29 and Asn-84. Residues 89–272 form the FAD-binding PCMH-type domain; that stretch reads QGSVPSYYIQ…LSTTTRVEPK (184 aa). Asn-285 and Asn-300 each carry an N-linked (GlcNAc...) asparagine glycan.

It belongs to the oxygen-dependent FAD-linked oxidoreductase family. FAD serves as cofactor.

The protein operates within mycotoxin biosynthesis. Functionally, FAD-linked oxidoreductase; part of the gene cluster that mediates the biosynthesis of the mycotoxins phomacins, leucine-derived cytochalasans with potent actin polymerization-inhibitory activities and monocot-specific antigerminative activities. The first step in the pathway is catalyzed by the hybrid PKS-NRPS phmA, assisted by the enoyl reductase phmE, that are responsible for fusion of the leucine precursor and the polyketide backbone to produce a 2-pyrrolidone intermediate. The polyketide synthase module (PKS) of phmA is responsible for the synthesis of the polyketide backbone and the downstream nonribosomal peptide synthetase (NRPS) amidates the carboxyl end of the polyketide with the leucine precursor. Because phmA lacks a designated enoylreductase (ER) domain, the required activity is provided the enoyl reductase phmE. Reduction by the hydrolyase phmG, followed by dehydration and intra-molecular Diels-Alder cyclization by the Diels-Alderase phmD then yield the required isoindolone-fused macrocycle. A number of oxidative steps catalyzed by the tailoring cytochrome P450 monooxygenase phmB, the FAD-linked oxidoreductase phmC and the short-chain dehydrogenase/reductase phmF, are further required to afford the final products, phomacin D and phomacin E. This is FAD-linked oxidoreductase phmC from Phaeosphaeria nodorum (strain SN15 / ATCC MYA-4574 / FGSC 10173) (Glume blotch fungus).